Consider the following 303-residue polypeptide: UDP-3-O-acyl-N-acetylglucosamine deacetylase (303 aa).

Zn(2+)-binding residues include H78, H237, and D241. The active-site Proton donor is the H264.

The protein belongs to the LpxC family. It depends on Zn(2+) as a cofactor.

The catalysed reaction is a UDP-3-O-[(3R)-3-hydroxyacyl]-N-acetyl-alpha-D-glucosamine + H2O = a UDP-3-O-[(3R)-3-hydroxyacyl]-alpha-D-glucosamine + acetate. It participates in glycolipid biosynthesis; lipid IV(A) biosynthesis; lipid IV(A) from (3R)-3-hydroxytetradecanoyl-[acyl-carrier-protein] and UDP-N-acetyl-alpha-D-glucosamine: step 2/6. In terms of biological role, catalyzes the hydrolysis of UDP-3-O-myristoyl-N-acetylglucosamine to form UDP-3-O-myristoylglucosamine and acetate, the committed step in lipid A biosynthesis. The chain is UDP-3-O-acyl-N-acetylglucosamine deacetylase from Xanthomonas campestris pv. campestris (strain 8004).